The following is a 212-amino-acid chain: Uridine kinase (212 aa).

An ATP-binding site is contributed by 13 to 20; sequence GGSGSGKT.

Belongs to the uridine kinase family.

Its subcellular location is the cytoplasm. The enzyme catalyses uridine + ATP = UMP + ADP + H(+). It catalyses the reaction cytidine + ATP = CMP + ADP + H(+). It participates in pyrimidine metabolism; CTP biosynthesis via salvage pathway; CTP from cytidine: step 1/3. The protein operates within pyrimidine metabolism; UMP biosynthesis via salvage pathway; UMP from uridine: step 1/1. The sequence is that of Uridine kinase from Bacillus cereus (strain B4264).